The primary structure comprises 414 residues: DNA primase large subunit PriL (414 aa).

4 residues coordinate [4Fe-4S] cluster: cysteine 251, cysteine 352, cysteine 370, and cysteine 376.

Belongs to the eukaryotic-type primase large subunit family. In terms of assembly, heterodimer of a small subunit (PriS) and a large subunit (PriL). [4Fe-4S] cluster is required as a cofactor.

Its function is as follows. Regulatory subunit of DNA primase, an RNA polymerase that catalyzes the synthesis of short RNA molecules used as primers for DNA polymerase during DNA replication. Stabilizes and modulates the activity of the small subunit, increasing the rate of DNA synthesis, and conferring RNA synthesis capability. The DNA polymerase activity may enable DNA primase to also catalyze primer extension after primer synthesis. May also play a role in DNA repair. This chain is DNA primase large subunit PriL, found in Methanocaldococcus jannaschii (strain ATCC 43067 / DSM 2661 / JAL-1 / JCM 10045 / NBRC 100440) (Methanococcus jannaschii).